The following is a 483-amino-acid chain: Serine hydroxymethyltransferase, cytosolic (483 aa).

K257 carries the post-translational modification N6-(pyridoxal phosphate)lysine.

The protein belongs to the SHMT family. Homotetramer. Identified in complex with ABRAXAS2 and the other subunits of the BRISC complex, at least composed of ABRAXAS2, BRCC3/BRCC36, BABAM2 and BABAM1/NBA1. It depends on pyridoxal 5'-phosphate as a cofactor.

Its subcellular location is the cytoplasm. The catalysed reaction is (6R)-5,10-methylene-5,6,7,8-tetrahydrofolate + glycine + H2O = (6S)-5,6,7,8-tetrahydrofolate + L-serine. It participates in one-carbon metabolism; tetrahydrofolate interconversion. In terms of biological role, interconversion of serine and glycine. The chain is Serine hydroxymethyltransferase, cytosolic (SHMT1) from Pongo abelii (Sumatran orangutan).